Consider the following 468-residue polypeptide: Ribulose bisphosphate carboxylase large chain (468 aa).

An N6,N6,N6-trimethyllysine modification is found at Lys-4. Substrate-binding residues include Asn-113 and Thr-163. Residue Lys-165 is the Proton acceptor of the active site. Lys-167 serves as a coordination point for substrate. Residues Lys-191, Asp-193, and Glu-194 each coordinate Mg(2+). Residue Lys-191 is modified to N6-carboxylysine. Catalysis depends on His-284, which acts as the Proton acceptor. Residues Arg-285, His-317, and Ser-369 each coordinate substrate.

The protein belongs to the RuBisCO large chain family. Type I subfamily. As to quaternary structure, heterohexadecamer of 8 large chains and 8 small chains; disulfide-linked. The disulfide link is formed within the large subunit homodimers. Requires Mg(2+) as cofactor. The disulfide bond which can form in the large chain dimeric partners within the hexadecamer appears to be associated with oxidative stress and protein turnover.

The protein localises to the plastid. It is found in the chloroplast. The enzyme catalyses 2 (2R)-3-phosphoglycerate + 2 H(+) = D-ribulose 1,5-bisphosphate + CO2 + H2O. It catalyses the reaction D-ribulose 1,5-bisphosphate + O2 = 2-phosphoglycolate + (2R)-3-phosphoglycerate + 2 H(+). In terms of biological role, ruBisCO catalyzes two reactions: the carboxylation of D-ribulose 1,5-bisphosphate, the primary event in carbon dioxide fixation, as well as the oxidative fragmentation of the pentose substrate in the photorespiration process. Both reactions occur simultaneously and in competition at the same active site. The sequence is that of Ribulose bisphosphate carboxylase large chain from Pandorea jasminoides (Bower vine).